We begin with the raw amino-acid sequence, 122 residues long: Large ribosomal subunit protein uL14 (122 aa).

Belongs to the universal ribosomal protein uL14 family. As to quaternary structure, part of the 50S ribosomal subunit. Forms a cluster with proteins L3 and L19. In the 70S ribosome, L14 and L19 interact and together make contacts with the 16S rRNA in bridges B5 and B8.

Its function is as follows. Binds to 23S rRNA. Forms part of two intersubunit bridges in the 70S ribosome. The sequence is that of Large ribosomal subunit protein uL14 from Anaeromyxobacter sp. (strain Fw109-5).